The sequence spans 149 residues: Transcriptional repressor NrdR (149 aa).

A zinc finger spans residues 3 to 34 (CPFCGHAATQVIDTRMSEEGDTVRRRRRCESC). The ATP-cone domain maps to 49-139 (PAVVKKNGSR…VYRSFEDVSE (91 aa)).

This sequence belongs to the NrdR family. Requires Zn(2+) as cofactor.

Negatively regulates transcription of bacterial ribonucleotide reductase nrd genes and operons by binding to NrdR-boxes. This is Transcriptional repressor NrdR from Ralstonia nicotianae (strain ATCC BAA-1114 / GMI1000) (Ralstonia solanacearum).